The primary structure comprises 308 residues: Glycine betaine uptake system ATP-binding protein YehX (308 aa).

Residues 2 to 235 (IEFSHVSKLF…PANDFVRQFF (234 aa)) form the ABC transporter domain. 34–41 (GTSGSGKS) is a binding site for ATP.

It belongs to the ABC transporter superfamily. The complex is composed of two ATP-binding proteins (YehX), two transmembrane proteins (YehW and YehY) and a solute-binding protein (YehZ).

The enzyme catalyses glycine betaine(out) + ATP + H2O = glycine betaine(in) + ADP + phosphate + H(+). Functionally, part of an ABC transporter complex involved in low-affinity glycine betaine uptake. Probably responsible for energy coupling to the transport system. The sequence is that of Glycine betaine uptake system ATP-binding protein YehX (yehX) from Escherichia coli (strain K12).